Reading from the N-terminus, the 890-residue chain is MRKLFEKVFGTYSEREIKKLDKTVDQIEALEAAYSKLTDAELKDKTRQFKERLAKGETLDDILPEAFATIREGAWRTLGMKHYRVQLYGGMVLHQGRIAEMRTGEGKTLMATLPVYLNALSGKGVHVVTVNDYLAKRDQEWMSKVYNFLGLTVGVIVHGITNEDRRKAYHCDITYGTNNEFGFDYLRDNMVIHLHEMVQRPLNYAIVDEVDSILIDEARTPLIISGQGDKSTKMYFIVDQFVKTLKKEVDFEVDEKANSVTLTEEGVERAEKYFAVDNLSDMENTELAHHINQALKANNLMKLDKDYVVKDGEIIIVDDFTGRLMFGRRYSEGLHQAIEAKEGLEVQRESKTLATITFQNYFRMYDKLSGMTGTAKTEEDEFISIYNMDVVEIPTNKPVVRIDEPDSVYKSEKGKVLSIIKDIEEKHKKGQPVLVGTISIEKSEELAAALKKKGIPHEVLNAKQHEREAEIIAQAGRKGIVTIATNMAGRGTDILLGGNPEFLAKREMKRMGYGDEIISMVTSHAETDNEELISARGKYEELYKRFKAETDREHEEVKAVGGLHIIGTERHESRRIDNQLRGRAGRQGDPGSSRFYISLEDDLMRLFGGERMLGIVDKMGLAEDEAIEHRLLTNSIENAQKKVEGRNFGIRKHVLQYDDVMNKQREVIYGERKKVLEGENMRDHIFSLMANIVDESIPMYTSEATSTPEIDTEGLRNHLSKIFLKADFGFINGQNKDVESLKSQIVAAAEKAYAVKEEEIGSERMREIERVILLQVIDTKWMDHIDAMDQLRQGIGLRAIGQVDPVRAYQLEGYDMFQEMINSIQEDTVRFLFSIEKEAVVERKQVAKPIEASHGDGDAKKAPVVKKEESGRNDLCPCGSGKKYKKCCGK.

Residues Gln-86, 104–108 (GEGKT), and Asp-493 each bind ATP. The span at 851 to 872 (EASHGDGDAKKAPVVKKEESGR) shows a compositional bias: basic and acidic residues. Residues 851 to 873 (EASHGDGDAKKAPVVKKEESGRN) form a disordered region. Residues Cys-876, Cys-878, Cys-887, and Cys-888 each coordinate Zn(2+).

This sequence belongs to the SecA family. In terms of assembly, monomer and homodimer. Part of the essential Sec protein translocation apparatus which comprises SecA, SecYEG and auxiliary proteins SecDF. Other proteins may also be involved. Requires Zn(2+) as cofactor.

The protein localises to the cell membrane. It localises to the cytoplasm. The catalysed reaction is ATP + H2O + cellular proteinSide 1 = ADP + phosphate + cellular proteinSide 2.. Part of the Sec protein translocase complex. Interacts with the SecYEG preprotein conducting channel. Has a central role in coupling the hydrolysis of ATP to the transfer of proteins into and across the cell membrane, serving as an ATP-driven molecular motor driving the stepwise translocation of polypeptide chains across the membrane. The chain is Protein translocase subunit SecA from Alkaliphilus oremlandii (strain OhILAs) (Clostridium oremlandii (strain OhILAs)).